We begin with the raw amino-acid sequence, 448 residues long: Histidinol dehydrogenase (448 aa).

NAD(+) is bound by residues Tyr-136, Gln-197, and Asn-220. Residues Ser-243, Gln-265, and His-268 each contribute to the substrate site. Zn(2+) is bound by residues Gln-265 and His-268. Catalysis depends on proton acceptor residues Glu-333 and His-334. His-334, Asp-367, Glu-421, and His-426 together coordinate substrate. Asp-367 serves as a coordination point for Zn(2+). His-426 provides a ligand contact to Zn(2+).

This sequence belongs to the histidinol dehydrogenase family. The cofactor is Zn(2+).

The catalysed reaction is L-histidinol + 2 NAD(+) + H2O = L-histidine + 2 NADH + 3 H(+). The protein operates within amino-acid biosynthesis; L-histidine biosynthesis; L-histidine from 5-phospho-alpha-D-ribose 1-diphosphate: step 9/9. In terms of biological role, catalyzes the sequential NAD-dependent oxidations of L-histidinol to L-histidinaldehyde and then to L-histidine. The protein is Histidinol dehydrogenase of Pseudomonas savastanoi pv. phaseolicola (strain 1448A / Race 6) (Pseudomonas syringae pv. phaseolicola (strain 1448A / Race 6)).